We begin with the raw amino-acid sequence, 108 residues long: Long neurotoxin 13 (108 aa).

The signal sequence occupies residues Met1–Thr21. 5 disulfides stabilise this stretch: Cys24–Cys42, Cys35–Cys63, Cys48–Cys52, Cys67–Cys78, and Cys79–Cys84.

The protein belongs to the three-finger toxin family. Long-chain subfamily. Type II alpha-neurotoxin sub-subfamily. In terms of tissue distribution, expressed by the venom gland.

It is found in the secreted. Binds with high affinity to muscular (alpha-1/CHRNA1) and neuronal (alpha-7/CHRNA7) nicotinic acetylcholine receptor (nAChR) and inhibits acetylcholine from binding to the receptor, thereby impairing neuromuscular and neuronal transmission. This is Long neurotoxin 13 from Drysdalia coronoides (White-lipped snake).